A 496-amino-acid polypeptide reads, in one-letter code: 7,8-epoxymelianol synthase CYP88A154 (496 aa).

The helical transmembrane segment at Phe11–Phe31 threads the bilayer. A heme-binding site is contributed by Cys444.

This sequence belongs to the cytochrome P450 family. Requires heme as cofactor.

It is found in the membrane. It catalyses the reaction melianol + reduced [NADPH--hemoprotein reductase] + O2 = 7,8-epoxymelianol + oxidized [NADPH--hemoprotein reductase] + H2O + H(+). The protein operates within secondary metabolite biosynthesis; terpenoid biosynthesis. Functionally, monooxygenase involved in the biosynthesis of glabretanes, limonoids and quassinoids triterpene natural products such as ailanthone, chaparrinone, glaucarubinone and amarolide, allelopathic degraded triterpene lactones inhibiting the growth of other plants, and possessing antimalarial, antifeedant, insecticidal, anti-inflammatory and anticancer activities. Catalyzes the epoxidation of melianol to produce 7,8-epoxymelianol. The protein is 7,8-epoxymelianol synthase CYP88A154 of Ailanthus altissima (Tree-of-heaven).